Here is a 356-residue protein sequence, read N- to C-terminus: Gluconolactonase (356 aa).

Positions 1 to 35 form a signal peptide, tat-type signal; sequence MTTGRMSRRECLSAAVMVPIAAMTATATITGSAQA.

In terms of assembly, homodimer. Post-translationally, predicted to be exported by the Tat system. The position of the signal peptide cleavage has been experimentally proven.

The protein resides in the periplasm. It carries out the reaction D-glucono-1,5-lactone + H2O = D-gluconate + H(+). Its pathway is carbohydrate acid metabolism; D-gluconate biosynthesis; D-gluconate from D-glucono-1,5-lactone: step 1/1. Functionally, hydrolyzes the gluconolactone formed by glucose-fructose oxidoreductase, and that formed in aerobic conditions by the glucose dehydrogenase present. The sequence is that of Gluconolactonase (gnl) from Zymomonas mobilis subsp. mobilis (strain ATCC 31821 / ZM4 / CP4).